The sequence spans 323 residues: Lipoyl synthase (323 aa).

Positions methionine 1–arginine 14 are enriched in basic and acidic residues. The disordered stretch occupies residues methionine 1–aspartate 25. Positions 61, 66, 72, 87, 91, 94, and 300 each coordinate [4Fe-4S] cluster. One can recognise a Radical SAM core domain in the interval tryptophan 73–leucine 289.

Belongs to the radical SAM superfamily. Lipoyl synthase family. [4Fe-4S] cluster serves as cofactor.

Its subcellular location is the cytoplasm. It catalyses the reaction [[Fe-S] cluster scaffold protein carrying a second [4Fe-4S](2+) cluster] + N(6)-octanoyl-L-lysyl-[protein] + 2 oxidized [2Fe-2S]-[ferredoxin] + 2 S-adenosyl-L-methionine + 4 H(+) = [[Fe-S] cluster scaffold protein] + N(6)-[(R)-dihydrolipoyl]-L-lysyl-[protein] + 4 Fe(3+) + 2 hydrogen sulfide + 2 5'-deoxyadenosine + 2 L-methionine + 2 reduced [2Fe-2S]-[ferredoxin]. The protein operates within protein modification; protein lipoylation via endogenous pathway; protein N(6)-(lipoyl)lysine from octanoyl-[acyl-carrier-protein]: step 2/2. In terms of biological role, catalyzes the radical-mediated insertion of two sulfur atoms into the C-6 and C-8 positions of the octanoyl moiety bound to the lipoyl domains of lipoate-dependent enzymes, thereby converting the octanoylated domains into lipoylated derivatives. The protein is Lipoyl synthase of Allorhizobium ampelinum (strain ATCC BAA-846 / DSM 112012 / S4) (Agrobacterium vitis (strain S4)).